Consider the following 198-residue polypeptide: Holliday junction resolvase RecU (198 aa).

Residues Thr83, Asp85, Glu98, and Gln117 each coordinate Mg(2+).

The protein belongs to the RecU family. The cofactor is Mg(2+).

The protein resides in the cytoplasm. It carries out the reaction Endonucleolytic cleavage at a junction such as a reciprocal single-stranded crossover between two homologous DNA duplexes (Holliday junction).. Its function is as follows. Endonuclease that resolves Holliday junction intermediates in genetic recombination. Cleaves mobile four-strand junctions by introducing symmetrical nicks in paired strands. Promotes annealing of linear ssDNA with homologous dsDNA. Required for DNA repair, homologous recombination and chromosome segregation. This is Holliday junction resolvase RecU from Streptococcus thermophilus (strain CNRZ 1066).